The following is a 543-amino-acid chain: GADAKEIAFDQKSRAALQAGVEKLANAVGVTLGPRGRNVVLDEYGNPKVVNDGVTIARAIELANPMENAGAALIREVASKTNDSAGDGTTTACVLAREIIKLGILSVTSGANPVSLKKGIDKTVQGLIEELERKARPVKGSGDIKAVASISAGNDELIGAMIADAIDKVGPDGVLSIESSSSFETTVDVEEGMEIDRGYISPQFVTNLEKSIVEFENARVLITDQKITSIKEIIPLLEQTTQLRCPLFIVAEDITGEALATLVVNKLRGIINVAAIKAPSFGERRKAVLQDIAIVTGAEYLAKDLGLLVENATVDQLGTARKITIHQTTTTLIADAASKDEIQARVAQLKKELSETDSIYDSEKLAERIAKLSGGVAVIKVGATTETELEDRQLRIEDAKNATFAAIEEGIVPGGGAAYVHLSTYVPAIKETIEDHDERLGADIIQKALQAPASLIANNAGVEGEVVIEKIKESEWEMGYNAMTDKYENLIESGVIDPAKVTRCALQNAASVSGMVLTTQAIVVEKPKPKPKVAEPAEGQLSV.

A chloroplast-targeting transit peptide spans 1–2; sequence GA.

It belongs to the chaperonin (HSP60) family. Oligomer of probably six alpha and six beta subunits.

The protein localises to the plastid. It localises to the chloroplast. This protein binds RuBisCO small and large subunits and is implicated in the assembly of the enzyme oligomer. This Triticum aestivum (Wheat) protein is RuBisCO large subunit-binding protein subunit alpha, chloroplastic.